A 261-amino-acid polypeptide reads, in one-letter code: Prostatic glandular kallikrein-6 (261 aa).

An N-terminal signal peptide occupies residues Met-1–Ala-18. Residues Pro-19–Arg-24 constitute a propeptide, activation peptide. A Peptidase S1 domain is found at Ile-25–Lys-258. Intrachain disulfides connect Cys-31–Cys-173, Cys-50–Cys-66, Cys-152–Cys-219, Cys-184–Cys-198, and Cys-209–Cys-234. His-65 (charge relay system) is an active-site residue. Asn-108 carries an N-linked (GlcNAc...) asparagine glycan. Asp-120 acts as the Charge relay system in catalysis. Ser-213 acts as the Charge relay system in catalysis.

It belongs to the peptidase S1 family. Kallikrein subfamily.

It catalyses the reaction Preferential cleavage of Arg-|-Xaa bonds in small molecule substrates. Highly selective action to release kallidin (lysyl-bradykinin) from kininogen involves hydrolysis of Met-|-Xaa or Leu-|-Xaa.. Functionally, glandular kallikreins cleave Met-Lys and Arg-Ser bonds in kininogen to release Lys-bradykinin. In Rattus norvegicus (Rat), this protein is Prostatic glandular kallikrein-6 (Klk6).